A 472-amino-acid polypeptide reads, in one-letter code: uncharacterized protein (472 aa).

Its subcellular location is the mitochondrion. This is an uncharacterized protein from Saccharomyces cerevisiae (strain ATCC 204508 / S288c) (Baker's yeast).